A 101-amino-acid polypeptide reads, in one-letter code: ATP synthase subunit c (101 aa).

The next 2 membrane-spanning stretches (helical) occupy residues 35 to 55 (IGAGLASVGILGTGVGQGLIG) and 81 to 101 (GISESGAIYSLVIAILLIFVV).

Belongs to the ATPase C chain family. In terms of assembly, F-type ATPases have 2 components, F(1) - the catalytic core - and F(0) - the membrane proton channel. F(1) has five subunits: alpha(3), beta(3), gamma(1), delta(1), epsilon(1). F(0) has three main subunits: a(1), b(2) and c(10-14). The alpha and beta chains form an alternating ring which encloses part of the gamma chain. F(1) is attached to F(0) by a central stalk formed by the gamma and epsilon chains, while a peripheral stalk is formed by the delta and b chains.

It is found in the cell membrane. Functionally, f(1)F(0) ATP synthase produces ATP from ADP in the presence of a proton or sodium gradient. F-type ATPases consist of two structural domains, F(1) containing the extramembraneous catalytic core and F(0) containing the membrane proton channel, linked together by a central stalk and a peripheral stalk. During catalysis, ATP synthesis in the catalytic domain of F(1) is coupled via a rotary mechanism of the central stalk subunits to proton translocation. Its function is as follows. Key component of the F(0) channel; it plays a direct role in translocation across the membrane. A homomeric c-ring of between 10-14 subunits forms the central stalk rotor element with the F(1) delta and epsilon subunits. The protein is ATP synthase subunit c of Mycoplasma capricolum subsp. capricolum (strain California kid / ATCC 27343 / NCTC 10154).